Here is a 163-residue protein sequence, read N- to C-terminus: MVAAPDRLITLAVVTGAHGITGEVRLKPFTEDAAQFKAYGIFSANGTPLTLKKLRPDPKGWVARFSEITDRNQAEALRGTALTVPRKALPDLPADEYYYIDLIGLPCVDPSGQSIGVSVAVENYGAGDILEIEKADEKRFMVPIAQAVDVHDDHLVIAADFIE.

The PRC barrel domain occupies 94–162; the sequence is ADEYYYIDLI…DHLVIAADFI (69 aa).

It belongs to the RimM family. In terms of assembly, binds ribosomal protein uS19.

The protein resides in the cytoplasm. In terms of biological role, an accessory protein needed during the final step in the assembly of 30S ribosomal subunit, possibly for assembly of the head region. Essential for efficient processing of 16S rRNA. May be needed both before and after RbfA during the maturation of 16S rRNA. It has affinity for free ribosomal 30S subunits but not for 70S ribosomes. The protein is Ribosome maturation factor RimM of Zymomonas mobilis subsp. mobilis (strain ATCC 31821 / ZM4 / CP4).